A 214-amino-acid polypeptide reads, in one-letter code: Phosphatidylserine decarboxylase proenzyme (214 aa).

Residue S182 is the Schiff-base intermediate with substrate; via pyruvic acid of the active site. S182 carries the pyruvic acid (Ser); by autocatalysis modification.

This sequence belongs to the phosphatidylserine decarboxylase family. PSD-A subfamily. Heterodimer of a large membrane-associated beta subunit and a small pyruvoyl-containing alpha subunit. The cofactor is pyruvate. Is synthesized initially as an inactive proenzyme. Formation of the active enzyme involves a self-maturation process in which the active site pyruvoyl group is generated from an internal serine residue via an autocatalytic post-translational modification. Two non-identical subunits are generated from the proenzyme in this reaction, and the pyruvate is formed at the N-terminus of the alpha chain, which is derived from the carboxyl end of the proenzyme. The post-translation cleavage follows an unusual pathway, termed non-hydrolytic serinolysis, in which the side chain hydroxyl group of the serine supplies its oxygen atom to form the C-terminus of the beta chain, while the remainder of the serine residue undergoes an oxidative deamination to produce ammonia and the pyruvoyl prosthetic group on the alpha chain.

Its subcellular location is the cell membrane. It carries out the reaction a 1,2-diacyl-sn-glycero-3-phospho-L-serine + H(+) = a 1,2-diacyl-sn-glycero-3-phosphoethanolamine + CO2. Its pathway is phospholipid metabolism; phosphatidylethanolamine biosynthesis; phosphatidylethanolamine from CDP-diacylglycerol: step 2/2. Functionally, catalyzes the formation of phosphatidylethanolamine (PtdEtn) from phosphatidylserine (PtdSer). This chain is Phosphatidylserine decarboxylase proenzyme, found in Burkholderia multivorans (strain ATCC 17616 / 249).